A 382-amino-acid chain; its full sequence is Gap junction alpha-1 protein (382 aa).

At 2–23 (GDWSALGKLLDKVQAYSTAGGK) the chain is on the cytoplasmic side. Serine 5 carries the post-translational modification Phosphoserine. A helical transmembrane segment spans residues 24-44 (VWLSVLFIFRILLLGTAVESA). At 45-76 (WGDEQSAFRCNTQQPGCENVCYDKSFPISHVR) the chain is on the extracellular side. Disulfide bonds link cysteine 54-cysteine 192 and cysteine 187-cysteine 198. Residues 77 to 97 (FWVLQIIFVSVPTLLYLAHVF) form a helical membrane-spanning segment. Topologically, residues 98–155 (YVMRKEEKLNKKEEELKVAQTDGVNVEMHLKQIEIKKFKYGIEEHGKVKMRGGLLRTY) are cytoplasmic. A Glycyl lysine isopeptide (Lys-Gly) (interchain with G-Cter in SUMO) cross-link involves residue lysine 144. The helical transmembrane segment at 156 to 176 (IISILFKSVFEVAFLLIQWYI) threads the bilayer. Residues 177-207 (YGFSLSAVYTCKRDPCPHQVDCFLSRPTEKT) are Extracellular-facing. Residues 208-228 (IFIIFMLVVSLVSLALNIIEL) form a helical membrane-spanning segment. Residues 229-382 (FYVFFKGVKD…SRPRPDDLEI (154 aa)) are Cytoplasmic-facing. Lysine 237 is covalently cross-linked (Glycyl lysine isopeptide (Lys-Gly) (interchain with G-Cter in SUMO)). An interaction with NOV region spans residues 244-382 (SDPYHATTGP…SRPRPDDLEI (139 aa)). The residue at position 247 (tyrosine 247) is a Phosphotyrosine. Residues serine 255, serine 257, and serine 262 each carry the phosphoserine modification. Residues 264 to 382 (KYAYFNGCSS…SRPRPDDLEI (119 aa)) form an interaction with UBQLN4 region. Residue cysteine 271 is modified to S-nitrosocysteine. Threonine 275 bears the Phosphothreonine mark. 2 positions are modified to phosphoserine: serine 306 and serine 314. The span at 317–332 (QNRMGQAGSTISNSHA) shows a compositional bias: polar residues. Residues 317–382 (QNRMGQAGST…SRPRPDDLEI (66 aa)) are disordered. At serine 325 the chain carries Phosphoserine; by CK1. Phosphothreonine is present on threonine 326. 2 positions are modified to phosphoserine; by CK1: serine 328 and serine 330. 2 positions are modified to phosphoserine: serine 344 and serine 365. Over residues 362–374 (RPSSRASSRASSR) the composition is skewed to low complexity. Serine 368 is subject to Phosphoserine; by PKC/PRKCG and PKC/PRKCD. Phosphoserine is present on residues serine 369 and serine 373.

It belongs to the connexin family. Alpha-type (group II) subfamily. In terms of assembly, a connexon is composed of a hexamer of connexins. Interacts with SGSM3. Interacts with RIC1/CIP150. Interacts with CNST and CSNK1D. Interacts (via C-terminus) with TJP1. Interacts (via C-terminus) with SRC (via SH3 domain). Interacts (not ubiquitinated) with UBQLN4 (via UBA domain). Interacts with NOV. Interacts with TMEM65. Interacts with ANK3/ANKG and PKP2. In terms of processing, phosphorylation at Ser-325, Ser-328 and Ser-330 by CK1 modulates gap junction assembly. Phosphorylated at Ser-368 by PRKCG; phosphorylation induces disassembly of gap junction plaques and inhibition of gap junction activity. Phosphorylation at Ser-368 by PRKCD triggers its internalization into small vesicles leading to proteasome-mediated degradation. Post-translationally, sumoylated with SUMO1, SUMO2 and SUMO3, which may regulate the level of functional Cx43 gap junctions at the plasma membrane. May be desumoylated by SENP1 or SENP2. S-nitrosylation at Cys-271 is enriched at the muscle endothelial gap junction in arteries, it augments channel permeability and may regulate of smooth muscle cell to endothelial cell communication. In terms of processing, acetylated in the developing cortex; leading to delocalization from the cell membrane.

The protein resides in the cell membrane. It localises to the cell junction. Its subcellular location is the gap junction. The protein localises to the endoplasmic reticulum. In terms of biological role, gap junction protein that acts as a regulator of bladder capacity. A gap junction consists of a cluster of closely packed pairs of transmembrane channels, the connexons, through which materials of low MW diffuse from one cell to a neighboring cell. May play a critical role in the physiology of hearing by participating in the recycling of potassium to the cochlear endolymph. Negative regulator of bladder functional capacity: acts by enhancing intercellular electrical and chemical transmission, thus sensitizing bladder muscles to cholinergic neural stimuli and causing them to contract. May play a role in cell growth inhibition through the regulation of NOV expression and localization. Plays an essential role in gap junction communication in the ventricles. The chain is Gap junction alpha-1 protein (GJA1) from Oryctolagus cuniculus (Rabbit).